A 323-amino-acid polypeptide reads, in one-letter code: MGSSGLARLQGLFAVYKPPGLKWLHVRETVELQLLKGLNAQQPSAPEQHVRFLLGPVEGSEEKKLTLTATSVPSLTTHRLVRGPAFRNLKIGVGHRLDVQASGVLVLAVGHGRSLLTDMYDAHLTKDYTVRGLLGKATDNFCEDGQLIEKTTYDHVTRERLDRILAMIQGSHQKALVMYSNLDLKSQEAYERAVQGVIRPMNKSPMLIAGIRCLHFAPPEFLLEVQCMHETQQQLRRLVHEIGLELKTTAVCMQVRRTRDGFFGLDDALLRTQWDLHSIQDAIQTAAPRVARELRKNLSLMSGHQQQLPSAGQPWASRVQAPL.

Residue D98 is the Nucleophile of the active site. The segment at 302–323 is disordered; it reads SGHQQQLPSAGQPWASRVQAPL.

It belongs to the pseudouridine synthase TruB family. Forms a regulatory protein-RNA complex, consisting of RCC1L, NGRN, RPUSD3, RPUSD4, TRUB2, FASTKD2 and 16S mt-rRNA.

It localises to the mitochondrion matrix. The catalysed reaction is a uridine in mRNA = a pseudouridine in mRNA. It catalyses the reaction uridine(55) in tRNA = pseudouridine(55) in tRNA. Minor enzyme contributing to the isomerization of uridine to pseudouridine (pseudouridylation) of specific mitochondrial mRNAs (mt-mRNAs) such as COXI and COXIII mt-mRNAs. As a component of a functional protein-RNA module, consisting of RCC1L, NGRN, RPUSD3, RPUSD4, TRUB2, FASTKD2 and 16S mitochondrial ribosomal RNA (16S mt-rRNA), controls 16S mt-rRNA abundance and is required for intra-mitochondrial translation. Also catalyzes pseudouridylation of some tRNAs, including synthesis of pseudouridine(55) from uracil-55, in the psi GC loop of a subset of tRNAs. This Rattus norvegicus (Rat) protein is Pseudouridylate synthase TRUB2, mitochondrial.